The following is a 322-amino-acid chain: MMESGEALLKKLDGRLSGLRGRLTPDTGMDKITWFRAGGPAQVLFQPSDEEDLSAFLKAVPEEIPLLVVGIGSNLLVRDGGVPGFVVRLSAKGFGEVEQVCDTQLRAGAAAPDKRVAAAALEAGLAGFHFYHGIPGGIGGALRMNAGANGVETRERVVEVRALDRKGEVHVLSNADMGYAYRHSSASPDLIFTSVLFEGVPGERDDIRRAMDEVQHHRETVQPVREKTGGSTFKNSEGTSAWKEIDKAGCRGLRVGGAQMSEMHCNFMINTGNATGHDLETLGETVRARVFENSGIRLHWEIKRLGLFREGEQIEEFLGKIV.

In terms of domain architecture, FAD-binding PCMH-type spans 36–202 (RAGGPAQVLF…TSVLFEGVPG (167 aa)). Arginine 182 is a catalytic residue. The Proton donor role is filled by serine 231. Glutamate 301 is an active-site residue.

This sequence belongs to the MurB family. Requires FAD as cofactor.

Its subcellular location is the cytoplasm. It catalyses the reaction UDP-N-acetyl-alpha-D-muramate + NADP(+) = UDP-N-acetyl-3-O-(1-carboxyvinyl)-alpha-D-glucosamine + NADPH + H(+). It participates in cell wall biogenesis; peptidoglycan biosynthesis. Cell wall formation. This is UDP-N-acetylenolpyruvoylglucosamine reductase from Brucella abortus (strain S19).